Here is a 313-residue protein sequence, read N- to C-terminus: Type II methyltransferase M.NlaX (313 aa).

One can recognise an SAM-dependent MTase C5-type domain in the interval 2–308; it reads FKIIDLFAGI…EQMKAALSAV (307 aa). The active site involves Cys-74.

Belongs to the class I-like SAM-binding methyltransferase superfamily. C5-methyltransferase family.

The enzyme catalyses a 2'-deoxycytidine in DNA + S-adenosyl-L-methionine = a 5-methyl-2'-deoxycytidine in DNA + S-adenosyl-L-homocysteine + H(+). A methylase, recognizes the double-stranded sequence 5'-CCNGG-3' and methylates C-2 on both strands. May be the equivalent of dcm in this bacteria, or it may protect the DNA from cleavage by the putative NlaXP endonuclease. The sequence is that of Type II methyltransferase M.NlaX (nlaXM) from Neisseria lactamica.